The sequence spans 122 residues: Large ribosomal subunit protein uL14 (122 aa).

Belongs to the universal ribosomal protein uL14 family. In terms of assembly, part of the 50S ribosomal subunit. Forms a cluster with proteins L3 and L19. In the 70S ribosome, L14 and L19 interact and together make contacts with the 16S rRNA in bridges B5 and B8.

Functionally, binds to 23S rRNA. Forms part of two intersubunit bridges in the 70S ribosome. This Ruthia magnifica subsp. Calyptogena magnifica protein is Large ribosomal subunit protein uL14.